A 353-amino-acid polypeptide reads, in one-letter code: Rhodopsin (353 aa).

Residues 1–36 (MNGTEGPFFYVPMVNTTGIVRSPYEYPQYYLVNPAA) are Extracellular-facing. 2 N-linked (GlcNAc...) asparagine glycosylation sites follow: N2 and N15. The helical transmembrane segment at 37–61 (YAALGAYMFLLILVGFPINFLTLYV) threads the bilayer. Residues 62–73 (TIEHKKLRTPLN) lie on the Cytoplasmic side of the membrane. A helical membrane pass occupies residues 74 to 96 (YILLNLAVADLFMVLGGFTTTMY). The Extracellular segment spans residues 97 to 110 (TSMHGYFVLGRLGC). An intrachain disulfide couples C110 to C187. The helical transmembrane segment at 111–133 (NIEGFFATLGGEIALWSLVVLAI) threads the bilayer. The short motif at 134 to 136 (ERW) is the 'Ionic lock' involved in activated form stabilization element. At 134–152 (ERWVVVCKPISNFRFGENH) the chain is on the cytoplasmic side. The helical transmembrane segment at 153-173 (AIMGLAFTWTMAMACAAPPLV) threads the bilayer. Residues 174–202 (GWSRYIPEGMQCSCGIDYYTRAEGFNNES) lie on the Extracellular side of the membrane. N-linked (GlcNAc...) asparagine glycosylation is present at N200. The helical transmembrane segment at 203–224 (FVIYMFICHFTIPLTVVFFCYG) threads the bilayer. Residues 225 to 252 (RLLCAVKEAAAAQQESETTQRAEKEVTR) are Cytoplasmic-facing. The chain crosses the membrane as a helical span at residues 253 to 274 (MVIMMVIAFLVCWLPYASVAWY). The Extracellular portion of the chain corresponds to 275–286 (IFTHQGSEFGPV). A helical transmembrane segment spans residues 287-308 (FMTIPAFFAKSSSIYNPMIYIC). Position 296 is an N6-(retinylidene)lysine (K296). The Cytoplasmic portion of the chain corresponds to 309 to 353 (LNKQFRHCMITTLCCGKNPFEEEEGASTASKTEASSVSSSSVSPA). 2 S-palmitoyl cysteine lipidation sites follow: C322 and C323. Residues 331 to 353 (EEGASTASKTEASSVSSSSVSPA) are disordered. Positions 334–353 (ASTASKTEASSVSSSSVSPA) are enriched in low complexity.

Belongs to the G-protein coupled receptor 1 family. Opsin subfamily. Phosphorylated on some or all of the serine and threonine residues present in the C-terminal region. Post-translationally, contains one covalently linked retinal chromophore.

It is found in the membrane. The protein resides in the cell projection. It localises to the cilium. Its subcellular location is the photoreceptor outer segment. In terms of biological role, photoreceptor required for image-forming vision at low light intensity. While most salt water fish species use retinal as chromophore, most freshwater fish use 3-dehydroretinal, or a mixture of retinal and 3-dehydroretinal. Light-induced isomerization of 11-cis to all-trans retinal triggers a conformational change that activates signaling via G-proteins. Subsequent receptor phosphorylation mediates displacement of the bound G-protein alpha subunit by arrestin and terminates signaling. This is Rhodopsin (rho) from Diplodus annularis (Annular seabream).